The sequence spans 377 residues: Succinyl-diaminopimelate desuccinylase (377 aa).

Residue H68 coordinates Zn(2+). Residue D70 is part of the active site. D101 provides a ligand contact to Zn(2+). The active-site Proton acceptor is the E135. Zn(2+)-binding residues include E136, E164, and H350.

It belongs to the peptidase M20A family. DapE subfamily. As to quaternary structure, homodimer. Zn(2+) serves as cofactor. Requires Co(2+) as cofactor.

The catalysed reaction is N-succinyl-(2S,6S)-2,6-diaminopimelate + H2O = (2S,6S)-2,6-diaminopimelate + succinate. It functions in the pathway amino-acid biosynthesis; L-lysine biosynthesis via DAP pathway; LL-2,6-diaminopimelate from (S)-tetrahydrodipicolinate (succinylase route): step 3/3. In terms of biological role, catalyzes the hydrolysis of N-succinyl-L,L-diaminopimelic acid (SDAP), forming succinate and LL-2,6-diaminopimelate (DAP), an intermediate involved in the bacterial biosynthesis of lysine and meso-diaminopimelic acid, an essential component of bacterial cell walls. This is Succinyl-diaminopimelate desuccinylase from Aliivibrio fischeri (strain MJ11) (Vibrio fischeri).